A 144-amino-acid chain; its full sequence is Large ribosomal subunit protein uL15 (144 aa).

Residues 1–52 (MRLNTLSPANGARHSRKRLGRGIGSGFGKTSGRGHKGQKSRSGSSIRRGFEG) form a disordered region. The span at 21-31 (RGIGSGFGKTS) shows a compositional bias: gly residues.

Belongs to the universal ribosomal protein uL15 family. As to quaternary structure, part of the 50S ribosomal subunit.

In terms of biological role, binds to the 23S rRNA. The polypeptide is Large ribosomal subunit protein uL15 (Buchnera aphidicola subsp. Acyrthosiphon pisum (strain 5A)).